Reading from the N-terminus, the 131-residue chain is Protein E11 homolog (131 aa).

It belongs to the chordopoxvirinae E11 family.

Its subcellular location is the virion. The polypeptide is Protein E11 homolog (Fowlpox virus (strain NVSL) (FPV)).